A 187-amino-acid polypeptide reads, in one-letter code: Elongation factor P (187 aa).

The protein belongs to the elongation factor P family.

It localises to the cytoplasm. It participates in protein biosynthesis; polypeptide chain elongation. Involved in peptide bond synthesis. Stimulates efficient translation and peptide-bond synthesis on native or reconstituted 70S ribosomes in vitro. Probably functions indirectly by altering the affinity of the ribosome for aminoacyl-tRNA, thus increasing their reactivity as acceptors for peptidyl transferase. The protein is Elongation factor P of Mycobacterium leprae (strain Br4923).